Reading from the N-terminus, the 282-residue chain is Acetyl-coenzyme A carboxylase carboxyl transferase subunit beta (282 aa).

The CoA carboxyltransferase N-terminal domain occupies 29–282; the sequence is LMKRCPNCGL…LLKYGGMQDD (254 aa). The Zn(2+) site is built by C33, C36, C51, and C54. The C4-type zinc-finger motif lies at 33 to 54; it reads CPNCGLEFFARRLDKYKTCPDC.

This sequence belongs to the AccD/PCCB family. As to quaternary structure, acetyl-CoA carboxylase is a heterohexamer composed of biotin carboxyl carrier protein (AccB), biotin carboxylase (AccC) and two subunits each of ACCase subunit alpha (AccA) and ACCase subunit beta (AccD). It depends on Zn(2+) as a cofactor.

Its subcellular location is the cytoplasm. It carries out the reaction N(6)-carboxybiotinyl-L-lysyl-[protein] + acetyl-CoA = N(6)-biotinyl-L-lysyl-[protein] + malonyl-CoA. It functions in the pathway lipid metabolism; malonyl-CoA biosynthesis; malonyl-CoA from acetyl-CoA: step 1/1. Functionally, component of the acetyl coenzyme A carboxylase (ACC) complex. Biotin carboxylase (BC) catalyzes the carboxylation of biotin on its carrier protein (BCCP) and then the CO(2) group is transferred by the transcarboxylase to acetyl-CoA to form malonyl-CoA. The protein is Acetyl-coenzyme A carboxylase carboxyl transferase subunit beta of Lactobacillus delbrueckii subsp. bulgaricus (strain ATCC 11842 / DSM 20081 / BCRC 10696 / JCM 1002 / NBRC 13953 / NCIMB 11778 / NCTC 12712 / WDCM 00102 / Lb 14).